The primary structure comprises 337 residues: Protein FAM169B (337 aa).

The segment at 278–326 is disordered; sequence STVHPKCSEEDTDTPGQASQEDGPTQFNHGESHKEWAVGEPERTQNGRR. Positions 291–306 are enriched in polar residues; that stretch reads TPGQASQEDGPTQFNH. Positions 307 to 322 are enriched in basic and acidic residues; sequence GESHKEWAVGEPERTQ.

It belongs to the FAM169 family.

This Mus musculus (Mouse) protein is Protein FAM169B (Fam169b).